The following is a 104-amino-acid chain: Pyrimidine/purine nucleoside phosphorylase (104 aa).

The protein belongs to the nucleoside phosphorylase PpnP family.

It carries out the reaction a purine D-ribonucleoside + phosphate = a purine nucleobase + alpha-D-ribose 1-phosphate. The enzyme catalyses adenosine + phosphate = alpha-D-ribose 1-phosphate + adenine. The catalysed reaction is cytidine + phosphate = cytosine + alpha-D-ribose 1-phosphate. It catalyses the reaction guanosine + phosphate = alpha-D-ribose 1-phosphate + guanine. It carries out the reaction inosine + phosphate = alpha-D-ribose 1-phosphate + hypoxanthine. The enzyme catalyses thymidine + phosphate = 2-deoxy-alpha-D-ribose 1-phosphate + thymine. The catalysed reaction is uridine + phosphate = alpha-D-ribose 1-phosphate + uracil. It catalyses the reaction xanthosine + phosphate = alpha-D-ribose 1-phosphate + xanthine. Its function is as follows. Catalyzes the phosphorolysis of diverse nucleosides, yielding D-ribose 1-phosphate and the respective free bases. Can use uridine, adenosine, guanosine, cytidine, thymidine, inosine and xanthosine as substrates. Also catalyzes the reverse reactions. This chain is Pyrimidine/purine nucleoside phosphorylase, found in Leptospira borgpetersenii serovar Hardjo-bovis (strain L550).